The chain runs to 577 residues: Pyruvate decarboxylase (577 aa).

Substrate is bound by residues Asp30 and His116. Positions 388-482 (TPGYGVNDFI…FLINNDGYTI (95 aa)) are thiamine pyrophosphate binding. Mg(2+)-binding residues include Asp450, Asn477, and Gly479. Position 483 (Glu483) interacts with substrate.

This sequence belongs to the TPP enzyme family. As to quaternary structure, homotetramer. It depends on a metal cation as a cofactor. The cofactor is thiamine diphosphate.

The catalysed reaction is a 2-oxocarboxylate + H(+) = an aldehyde + CO2. This is Pyruvate decarboxylase (pdcA) from Aspergillus parasiticus.